The following is a 126-amino-acid chain: MSIGVPIKVLHEAEGHIVTCETNTGEVYRGKLIEAEDNMNCQMSNITVTYRDGRVAQLEQVYIRGSKIRFLILPDMLKNAPMLKSMKNKNQGSGAGRGKAAILKAQVAARGRGRGMGRGNIFQKRR.

Serine 2 bears the N-acetylserine mark. Residues 5–77 (VPIKVLHEAE…IRFLILPDML (73 aa)) enclose the Sm domain. 5 repeat units span residues 110 to 111 (RG), 112 to 113 (RG), 114 to 115 (RG), 116 to 117 (MG), and 118 to 119 (RG). Residues 110-119 (RGRGRGMGRG) are 5 X 2 AA tandem repeats of [RM]-G; required for interaction with SMN1.

It belongs to the snRNP core protein family. Core component of the spliceosomal U1, U2, U4 and U5 small nuclear ribonucleoproteins (snRNPs), the building blocks of the spliceosome. Most spliceosomal snRNPs contain a common set of Sm proteins, SNRPB, SNRPD1, SNRPD2, SNRPD3, SNRPE, SNRPF and SNRPG that assemble in a heptameric protein ring on the Sm site of the small nuclear RNA to form the core snRNP. Component of the U1 snRNP. The U1 snRNP is composed of the U1 snRNA and the 7 core Sm proteins SNRPB, SNRPD1, SNRPD2, SNRPD3, SNRPE, SNRPF and SNRPG, and at least three U1 snRNP-specific proteins SNRNP70/U1-70K, SNRPA/U1-A and SNRPC/U1-C. Component of the U4/U6-U5 tri-snRNP complex composed of the U4, U6 and U5 snRNAs and at least PRPF3, PRPF4, PRPF6, PRPF8, PRPF31, SNRNP200, TXNL4A, SNRNP40, SNRPB, SNRPD1, SNRPD2, SNRPD3, SNRPE, SNRPF, SNRPG, DDX23, CD2BP2, PPIH, SNU13, EFTUD2, SART1 and USP39, plus LSM2, LSM3, LSM4, LSM5, LSM6, LSM7 and LSM8. Component of the U7 snRNP complex, or U7 Sm protein core complex, that is composed of the U7 snRNA and at least LSM10, LSM11, SNRPB, SNRPD3, SNRPE, SNRPF and SNRPG; the complex does not contain SNRPD1 and SNRPD2. Component of the minor spliceosome, which splices U12-type introns. Part of the SMN-Sm complex that contains SMN1, GEMIN2/SIP1, DDX20/GEMIN3, GEMIN4, GEMIN5, GEMIN6, GEMIN7, GEMIN8, STRAP/UNRIP and the Sm proteins SNRPB, SNRPD1, SNRPD2, SNRPD3, SNRPE, SNRPF and SNRPG; catalyzes core snRNPs assembly. Forms a 6S pICln-Sm complex composed of CLNS1A/pICln, SNRPD1, SNRPD2, SNRPE, SNRPF and SNRPG; ring-like structure where CLNS1A/pICln mimics additional Sm proteins and which is unable to assemble into the core snRNP. Interacts (via C-terminus) with SMN1 (via Tudor domain); the interaction is direct. Methylated on arginine residues by PRMT5 and PRMT7; probable asymmetric dimethylation which is required for assembly and biogenesis of snRNPs.

Its subcellular location is the cytoplasm. The protein localises to the cytosol. It localises to the nucleus. Functionally, plays a role in pre-mRNA splicing as a core component of the spliceosomal U1, U2, U4 and U5 small nuclear ribonucleoproteins (snRNPs), the building blocks of the spliceosome. Component of both the pre-catalytic spliceosome B complex and activated spliceosome C complexes. As a component of the minor spliceosome, involved in the splicing of U12-type introns in pre-mRNAs. As part of the U7 snRNP it is involved in histone pre-mRNA 3'-end processing. The chain is Small nuclear ribonucleoprotein Sm D3 (SNRPD3) from Homo sapiens (Human).